Reading from the N-terminus, the 103-residue chain is Non-histone chromosomal protein HMG-14B (103 aa).

Residues 1 to 103 (MPKRKVAASR…AVEKEEVKSE (103 aa)) form a disordered region. Residues 29–50 (VPDKAEPKAKALAAKDKSENKK) are compositionally biased toward basic and acidic residues. A compositionally biased stretch (basic residues) spans 51–60 (AQSKGKKGPK). Residues 94–103 (AVEKEEVKSE) are compositionally biased toward basic and acidic residues.

Belongs to the HMGN family.

It is found in the nucleus. In terms of biological role, binds to the inner side of the nucleosomal DNA thus altering the interaction between the DNA and the histone octamer. May be involved in the process which maintains transcribable genes in a unique chromatin conformation. This Gallus gallus (Chicken) protein is Non-histone chromosomal protein HMG-14B (HMG14).